A 75-amino-acid polypeptide reads, in one-letter code: Large ribosomal subunit protein bL31 (75 aa).

In terms of assembly, part of the 50S ribosomal subunit.

Its function is as follows. Binds the 23S rRNA. The chain is Large ribosomal subunit protein bL31 from Rhodopseudomonas palustris (strain ATCC BAA-98 / CGA009).